The following is a 391-amino-acid chain: 1-deoxy-D-xylulose 5-phosphate reductoisomerase (391 aa).

Residues Thr-17, Gly-18, Ser-19, Ile-20, Asn-47, and Asn-130 each contribute to the NADPH site. Residue Lys-131 participates in 1-deoxy-D-xylulose 5-phosphate binding. Glu-132 serves as a coordination point for NADPH. Asp-156 serves as a coordination point for Mn(2+). Residues Ser-157, Glu-158, Ser-182, and His-205 each contribute to the 1-deoxy-D-xylulose 5-phosphate site. Glu-158 is a binding site for Mn(2+). An NADPH-binding site is contributed by Gly-211. The 1-deoxy-D-xylulose 5-phosphate site is built by Ser-218, Asn-223, Lys-224, and Glu-227. Glu-227 contributes to the Mn(2+) binding site.

This sequence belongs to the DXR family. Mg(2+) serves as cofactor. The cofactor is Mn(2+).

It catalyses the reaction 2-C-methyl-D-erythritol 4-phosphate + NADP(+) = 1-deoxy-D-xylulose 5-phosphate + NADPH + H(+). Its pathway is isoprenoid biosynthesis; isopentenyl diphosphate biosynthesis via DXP pathway; isopentenyl diphosphate from 1-deoxy-D-xylulose 5-phosphate: step 1/6. In terms of biological role, catalyzes the NADPH-dependent rearrangement and reduction of 1-deoxy-D-xylulose-5-phosphate (DXP) to 2-C-methyl-D-erythritol 4-phosphate (MEP). This Rhizobium meliloti (strain 1021) (Ensifer meliloti) protein is 1-deoxy-D-xylulose 5-phosphate reductoisomerase.